A 319-amino-acid chain; its full sequence is tRNA(Ile)-lysidine synthase (319 aa).

32–37 contacts ATP; that stretch reads SGGSDS.

This sequence belongs to the tRNA(Ile)-lysidine synthase family.

It is found in the cytoplasm. It carries out the reaction cytidine(34) in tRNA(Ile2) + L-lysine + ATP = lysidine(34) in tRNA(Ile2) + AMP + diphosphate + H(+). In terms of biological role, ligates lysine onto the cytidine present at position 34 of the AUA codon-specific tRNA(Ile) that contains the anticodon CAU, in an ATP-dependent manner. Cytidine is converted to lysidine, thus changing the amino acid specificity of the tRNA from methionine to isoleucine. The polypeptide is tRNA(Ile)-lysidine synthase (Chlamydia pneumoniae (Chlamydophila pneumoniae)).